The following is a 166-amino-acid chain: MEMTNAQRLILSNQYFLMSQLDPNNANKYKRLQTIVERGYELHMRELNREFGCLPETECREIIDIMEMYHAMQESNRMLDDAARKDVDQRRLTFLGFDMATEAQLVNYVRFLVDSEGLYPQFDKGEHHFNSQMPMLAKYRRMLTTWRNCPRQYHLSGNELRQIMNA.

It belongs to the UPF0304 family.

The chain is UPF0304 protein VC_1871 from Vibrio cholerae serotype O1 (strain ATCC 39315 / El Tor Inaba N16961).